The following is a 476-amino-acid chain: Glycogen synthase (476 aa).

An ADP-alpha-D-glucose-binding site is contributed by Lys-15.

Belongs to the glycosyltransferase 1 family. Bacterial/plant glycogen synthase subfamily.

The catalysed reaction is [(1-&gt;4)-alpha-D-glucosyl](n) + ADP-alpha-D-glucose = [(1-&gt;4)-alpha-D-glucosyl](n+1) + ADP + H(+). Its pathway is glycan biosynthesis; glycogen biosynthesis. In terms of biological role, synthesizes alpha-1,4-glucan chains using ADP-glucose. This Bacillus cereus (strain ATCC 10987 / NRS 248) protein is Glycogen synthase.